Consider the following 235-residue polypeptide: UPF0714 protein YmaC (235 aa).

The chain crosses the membrane as a helical span at residues 5–24; it reads LLNVILVLAIVLFLRYVHYS.

It belongs to the UPF0714 family.

The protein resides in the cell membrane. The sequence is that of UPF0714 protein YmaC (ymaC) from Bacillus subtilis (strain 168).